Reading from the N-terminus, the 457-residue chain is ATP synthase subunit beta (457 aa).

147–154 (GGAGVGKT) contributes to the ATP binding site.

The protein belongs to the ATPase alpha/beta chains family. F-type ATPases have 2 components, CF(1) - the catalytic core - and CF(0) - the membrane proton channel. CF(1) has five subunits: alpha(3), beta(3), gamma(1), delta(1), epsilon(1). CF(0) has three main subunits: a(1), b(2) and c(9-12). The alpha and beta chains form an alternating ring which encloses part of the gamma chain. CF(1) is attached to CF(0) by a central stalk formed by the gamma and epsilon chains, while a peripheral stalk is formed by the delta and b chains.

The protein resides in the cell inner membrane. The catalysed reaction is ATP + H2O + 4 H(+)(in) = ADP + phosphate + 5 H(+)(out). Functionally, produces ATP from ADP in the presence of a proton gradient across the membrane. The catalytic sites are hosted primarily by the beta subunits. This chain is ATP synthase subunit beta, found in Pasteurella multocida (strain Pm70).